The following is a 93-amino-acid chain: Large ribosomal subunit protein uL23cz/uL23cy (93 aa).

The protein belongs to the universal ribosomal protein uL23 family. In terms of assembly, part of the 50S ribosomal subunit.

The protein localises to the plastid. Its subcellular location is the chloroplast. In terms of biological role, binds to 23S rRNA. This is Large ribosomal subunit protein uL23cz/uL23cy (rpl23-A) from Phaseolus angularis (Azuki bean).